We begin with the raw amino-acid sequence, 738 residues long: Catalase-peroxidase (738 aa).

Positions 1–24 (MEPLFPKRLLSIAVLCVASATAQA) are cleaved as a signal peptide. Positions 104-226 (WHAAGTYRMI…FGATEMGLIY (123 aa)) form a cross-link, tryptophyl-tyrosyl-methioninium (Trp-Tyr) (with M-252). His105 acts as the Proton acceptor in catalysis. The interval 191 to 213 (EEVNWGPEGQWLTDRRHSGDRKL) is disordered. Positions 203-213 (TDRRHSGDRKL) are enriched in basic and acidic residues. The tryptophyl-tyrosyl-methioninium (Tyr-Met) (with W-104) cross-link spans 226–252 (YVNPEGPHGNPDPIAAAHDIRQAFGRM). Residue His267 participates in heme b binding.

This sequence belongs to the peroxidase family. Peroxidase/catalase subfamily. As to quaternary structure, homodimer or homotetramer. Heme b is required as a cofactor. Formation of the three residue Trp-Tyr-Met cross-link is important for the catalase, but not the peroxidase activity of the enzyme.

It carries out the reaction H2O2 + AH2 = A + 2 H2O. It catalyses the reaction 2 H2O2 = O2 + 2 H2O. In terms of biological role, bifunctional enzyme with both catalase and broad-spectrum peroxidase activity. This is Catalase-peroxidase from Saccharophagus degradans (strain 2-40 / ATCC 43961 / DSM 17024).